A 195-amino-acid polypeptide reads, in one-letter code: Type II secretion system protein J (195 aa).

The propeptide at 1–7 (MINRQQG) is leader sequence. An N-methylphenylalanine modification is found at Phe-8. Residues 8 to 29 (FTLLEVMAALAIFSMLSVLAFM) traverse the membrane as a helical segment.

Belongs to the GSP J family. In terms of assembly, type II secretion is composed of four main components: the outer membrane complex, the inner membrane complex, the cytoplasmic secretion ATPase and the periplasm-spanning pseudopilus. Interacts with core component GspG. Post-translationally, cleaved by prepilin peptidase. Methylated by prepilin peptidase at the amino group of the N-terminal phenylalanine once the leader sequence is cleaved by prepilin peptidase.

Its subcellular location is the cell inner membrane. Its function is as follows. Component of the type II secretion system required for the energy-dependent secretion of extracellular factors such as proteases and toxins from the periplasm. Part of the pseudopilus tip complex that is critical for the recognition and binding of secretion substrates. This Escherichia coli (strain K12) protein is Type II secretion system protein J (gspJ).